Reading from the N-terminus, the 250-residue chain is Histidine utilization repressor (250 aa).

The 69-residue stretch at 20–88 (APLYARVKQM…QGVGTFVAEP (69 aa)) folds into the HTH gntR-type domain. Residues 48 to 67 (ESELVSQLGFSRMTINRALR) constitute a DNA-binding region (H-T-H motif).

It functions in the pathway amino-acid degradation; L-histidine degradation into L-glutamate [regulation]. Functionally, repressor which binds to the hutP region in the histidine utilization (hut) operon. It blocks the expression of all the hut genes in the absence of inducer. This is Histidine utilization repressor (hutC) from Pseudomonas aeruginosa (strain ATCC 15692 / DSM 22644 / CIP 104116 / JCM 14847 / LMG 12228 / 1C / PRS 101 / PAO1).